A 437-amino-acid chain; its full sequence is Epsilon-sarcoglycan (437 aa).

Residues 1-317 lie on the Extracellular side of the membrane; the sequence is MLLFWWWELG…LKSRDYYTDF (317 aa). The N-linked (GlcNAc...) asparagine glycan is linked to Asn-200. Residues 318 to 338 form a helical membrane-spanning segment; sequence LVTLAVPSAVALVLFLILAYI. Residues 339-437 are Cytoplasmic-facing; the sequence is MCCRREGVEK…QPQTTGKWYP (99 aa).

It belongs to the sarcoglycan alpha/epsilon family. In terms of processing, N-glycosylated. Ubiquitinated, leading to its degradation by the proteasome. As to expression, identified in all tissues tested. Expression highest in lung and placenta, moderate in brain, heart and skeletal muscle, low in kidney and liver. Also detected in embryo.

The protein resides in the cell membrane. The protein localises to the sarcolemma. Its subcellular location is the golgi apparatus. It localises to the cell projection. It is found in the dendrite. The protein resides in the cytoplasm. The protein localises to the cytoskeleton. Its function is as follows. Component of the sarcoglycan complex, a subcomplex of the dystrophin-glycoprotein complex which forms a link between the F-actin cytoskeleton and the extracellular matrix. The sequence is that of Epsilon-sarcoglycan (Sgce) from Mus musculus (Mouse).